The sequence spans 314 residues: Malate dehydrogenase (314 aa).

Residues 12-17 (GAGNIG) and Asp36 each bind NAD(+). Positions 85 and 91 each coordinate substrate. Residues Asn98 and 121–123 (VTN) contribute to the NAD(+) site. The substrate site is built by Asn123 and Arg154. His178 (proton acceptor) is an active-site residue.

Belongs to the LDH/MDH superfamily. MDH type 3 family.

It carries out the reaction (S)-malate + NAD(+) = oxaloacetate + NADH + H(+). In terms of biological role, catalyzes the reversible oxidation of malate to oxaloacetate. The chain is Malate dehydrogenase from Wolbachia pipientis subsp. Culex pipiens (strain wPip).